We begin with the raw amino-acid sequence, 184 residues long: NADH-quinone oxidoreductase subunit B (184 aa).

Cys37, Cys38, Cys103, and Cys132 together coordinate [4Fe-4S] cluster.

Belongs to the complex I 20 kDa subunit family. In terms of assembly, NDH-1 is composed of 14 different subunits. Subunits NuoB, C, D, E, F, and G constitute the peripheral sector of the complex. It depends on [4Fe-4S] cluster as a cofactor.

It localises to the cell membrane. It carries out the reaction a quinone + NADH + 5 H(+)(in) = a quinol + NAD(+) + 4 H(+)(out). Its function is as follows. NDH-1 shuttles electrons from NADH, via FMN and iron-sulfur (Fe-S) centers, to quinones in the respiratory chain. The immediate electron acceptor for the enzyme in this species is believed to be a menaquinone. Couples the redox reaction to proton translocation (for every two electrons transferred, four hydrogen ions are translocated across the cytoplasmic membrane), and thus conserves the redox energy in a proton gradient. The polypeptide is NADH-quinone oxidoreductase subunit B (Nocardioides sp. (strain ATCC BAA-499 / JS614)).